A 300-amino-acid chain; its full sequence is Transcription initiation factor IIB (300 aa).

The segment at 3 to 34 (KQRVCPVCGSTEFIYDPERGEIVCARCGYVIE) adopts a TFIIB-type zinc-finger fold. Cys-7, Cys-10, Cys-26, and Cys-29 together coordinate Zn(2+). Repeat copies occupy residues 114–197 (SELD…ARNL) and 210–291 (DYVN…ELVE).

The protein belongs to the TFIIB family.

In terms of biological role, stabilizes TBP binding to an archaeal box-A promoter. Also responsible for recruiting RNA polymerase II to the pre-initiation complex (DNA-TBP-TFIIB). This is Transcription initiation factor IIB from Pyrococcus abyssi (strain GE5 / Orsay).